The sequence spans 396 residues: Elongation factor Tu (396 aa).

The region spanning 10 to 206 (KPHVNVGTIG…ALDTYIPEPE (197 aa)) is the tr-type G domain. Residues 19–26 (GHVDHGKT) are G1. A GTP-binding site is contributed by 19 to 26 (GHVDHGKT). Thr-26 provides a ligand contact to Mg(2+). Positions 60 to 64 (GITIN) are G2. Residues 81–84 (DCPG) form a G3 region. GTP is bound by residues 81–85 (DCPGH) and 136–139 (NKCD). Positions 136–139 (NKCD) are G4. The tract at residues 174 to 176 (SAL) is G5.

This sequence belongs to the TRAFAC class translation factor GTPase superfamily. Classic translation factor GTPase family. EF-Tu/EF-1A subfamily. In terms of assembly, monomer.

The protein resides in the cytoplasm. The catalysed reaction is GTP + H2O = GDP + phosphate + H(+). Functionally, GTP hydrolase that promotes the GTP-dependent binding of aminoacyl-tRNA to the A-site of ribosomes during protein biosynthesis. This chain is Elongation factor Tu, found in Acinetobacter baylyi (strain ATCC 33305 / BD413 / ADP1).